Reading from the N-terminus, the 249-residue chain is Diaminopimelate epimerase (249 aa).

2 residues coordinate substrate: Asn11 and Asn60. The Proton donor role is filled by Cys69. Substrate-binding positions include 70–71, Asn164, and 182–183; these read GN and ER. The active-site Proton acceptor is Cys192. 193 to 194 provides a ligand contact to substrate; the sequence is GT.

It belongs to the diaminopimelate epimerase family. In terms of assembly, homodimer.

The protein resides in the cytoplasm. It catalyses the reaction (2S,6S)-2,6-diaminopimelate = meso-2,6-diaminopimelate. It participates in amino-acid biosynthesis; L-lysine biosynthesis via DAP pathway; DL-2,6-diaminopimelate from LL-2,6-diaminopimelate: step 1/1. In terms of biological role, catalyzes the stereoinversion of LL-2,6-diaminopimelate (L,L-DAP) to meso-diaminopimelate (meso-DAP), a precursor of L-lysine and an essential component of the bacterial peptidoglycan. In Campylobacter jejuni subsp. jejuni serotype O:23/36 (strain 81-176), this protein is Diaminopimelate epimerase.